Here is a 400-residue protein sequence, read N- to C-terminus: Beta-ketoadipyl-CoA thiolase (400 aa).

Cysteine 90 (acyl-thioester intermediate) is an active-site residue. Catalysis depends on proton acceptor residues histidine 356 and cysteine 386.

This sequence belongs to the thiolase-like superfamily. Thiolase family.

The catalysed reaction is succinyl-CoA + acetyl-CoA = 3-oxoadipyl-CoA + CoA. The protein operates within aromatic compound metabolism; beta-ketoadipate pathway; acetyl-CoA and succinyl-CoA from 3-oxoadipate: step 2/2. Functionally, catalyzes thiolytic cleavage of beta-ketoadipyl-CoA to succinyl-CoA and acetyl-CoA. The polypeptide is Beta-ketoadipyl-CoA thiolase (pcaF) (Pseudomonas putida (Arthrobacter siderocapsulatus)).